The sequence spans 531 residues: SWI/SNF-related matrix-associated actin-dependent regulator of chromatin subfamily D member 2 (531 aa).

Asymmetric dimethylarginine occurs at positions 81 and 104. Phosphoserine is present on S203. The segment at 205-226 is disordered; it reads SKAEGDSAGTAGTPGGTPAGDK. T217 is modified (phosphothreonine). K226 participates in a covalent cross-link: Glycyl lysine isopeptide (Lys-Gly) (interchain with G-Cter in SUMO2). The 78-residue stretch at 306-383 folds into the SWIB/MDM2 domain; it reads HQPPQYKLDP…PMKLAGLLQH (78 aa).

Belongs to the SMARCD family. Component of the multiprotein chromatin-remodeling complexes SWI/SNF: SWI/SNF-A (BAF), SWI/SNF-B (PBAF) and related complexes. The canonical complex contains a catalytic subunit (either SMARCA4/BRG1/BAF190A or SMARCA2/BRM/BAF190B), and at least SMARCE1, ACTL6A/BAF53, SMARCC1/BAF155, SMARCC2/BAF170, and SMARCB1/SNF5/BAF47. Other subunits specific to each of the complexes may also be present permitting several possible combinations developmentally and tissue specific. Component of the BAF complex, which includes at least actin (ACTB), ARID1A/BAF250A, ARID1B/BAF250B, SMARCA2/BRM, SMARCA4/BRG1, ACTL6A/BAF53, ACTL6B/BAF53B, SMARCE1/BAF57, SMARCC1/BAF155, SMARCC2/BAF170, SMARCB1/SNF5/INI1, and one or more SMARCD1/BAF60A, SMARCD2/BAF60B, or SMARCD3/BAF60C. In muscle cells, the BAF complex also contains DPF3. Component of the SWI/SNF-B (PBAF) chromatin remodeling complex, at least composed of SMARCA4/BRG1, SMARCB1/BAF47/SNF5, ACTL6A/BAF53A or ACTL6B/BAF53B, SMARCE1/BAF57, SMARCD1/BAF60A, SMARCD2/BAF60B, perhaps SMARCD3/BAF60C, SMARCC1/BAF155, SMARCC2/BAF170, PBRM1/BAF180, ARID2/BAF200 and actin (ACTB). Interacts with UNKL. Interacts with CEBPE. Ubiquitinated through a signaling process involving RAC1 and the RING finger protein UNKL. In terms of tissue distribution, isoform 2 is expressed in the pancreas.

It localises to the nucleus. Its function is as follows. Involved in transcriptional activation and repression of select genes by chromatin remodeling (alteration of DNA-nucleosome topology). Component of SWI/SNF chromatin remodeling complexes that carry out key enzymatic activities, changing chromatin structure by altering DNA-histone contacts within a nucleosome in an ATP-dependent manner. Critical regulator of myeloid differentiation, controlling granulocytopoiesis and the expression of genes involved in neutrophil granule formation. The polypeptide is SWI/SNF-related matrix-associated actin-dependent regulator of chromatin subfamily D member 2 (SMARCD2) (Homo sapiens (Human)).